Consider the following 340-residue polypeptide: Phosphoribosylformylglycinamidine cyclo-ligase (340 aa).

Belongs to the AIR synthase family.

Its subcellular location is the cytoplasm. It carries out the reaction 2-formamido-N(1)-(5-O-phospho-beta-D-ribosyl)acetamidine + ATP = 5-amino-1-(5-phospho-beta-D-ribosyl)imidazole + ADP + phosphate + H(+). It functions in the pathway purine metabolism; IMP biosynthesis via de novo pathway; 5-amino-1-(5-phospho-D-ribosyl)imidazole from N(2)-formyl-N(1)-(5-phospho-D-ribosyl)glycinamide: step 2/2. This Crocosphaera subtropica (strain ATCC 51142 / BH68) (Cyanothece sp. (strain ATCC 51142)) protein is Phosphoribosylformylglycinamidine cyclo-ligase.